The following is a 256-amino-acid chain: Alcohol dehydrogenase (256 aa).

An NAD(+)-binding site is contributed by 12 to 35 (FVAGLGGIGLDTSKELVKRDLKNL). Ser140 contacts substrate. Catalysis depends on Tyr153, which acts as the Proton acceptor.

Belongs to the short-chain dehydrogenases/reductases (SDR) family. Homodimer.

The catalysed reaction is a primary alcohol + NAD(+) = an aldehyde + NADH + H(+). It carries out the reaction a secondary alcohol + NAD(+) = a ketone + NADH + H(+). The protein is Alcohol dehydrogenase (Adh) of Drosophila teissieri (Fruit fly).